Reading from the N-terminus, the 602-residue chain is Elongation factor 4 (602 aa).

The tr-type G domain maps to 7–189; the sequence is KKIRNFSIIA…SIVKNVPSPK (183 aa). GTP contacts are provided by residues 19–24 and 136–139; these read DHGKST and NKID.

Belongs to the TRAFAC class translation factor GTPase superfamily. Classic translation factor GTPase family. LepA subfamily.

The protein resides in the cell membrane. The enzyme catalyses GTP + H2O = GDP + phosphate + H(+). In terms of biological role, required for accurate and efficient protein synthesis under certain stress conditions. May act as a fidelity factor of the translation reaction, by catalyzing a one-codon backward translocation of tRNAs on improperly translocated ribosomes. Back-translocation proceeds from a post-translocation (POST) complex to a pre-translocation (PRE) complex, thus giving elongation factor G a second chance to translocate the tRNAs correctly. Binds to ribosomes in a GTP-dependent manner. The chain is Elongation factor 4 from Alkaliphilus oremlandii (strain OhILAs) (Clostridium oremlandii (strain OhILAs)).